The following is a 358-amino-acid chain: Phospho-N-acetylmuramoyl-pentapeptide-transferase (358 aa).

Transmembrane regions (helical) follow at residues 27 to 47 (IYAM…VIRV), 73 to 93 (TMGG…WADL), 97 to 117 (YIWT…VDDY), 134 to 154 (MFWQ…KPGF), 170 to 190 (LWFW…NAVN), 197 to 217 (GLAI…SYVA), 233 to 253 (GAGE…GFLW), 261 to 281 (VFMG…IAVI), 286 to 306 (ILLV…IFQV), and 335 to 355 (KIIV…ISTL).

It belongs to the glycosyltransferase 4 family. MraY subfamily. It depends on Mg(2+) as a cofactor.

Its subcellular location is the cell inner membrane. It catalyses the reaction UDP-N-acetyl-alpha-D-muramoyl-L-alanyl-gamma-D-glutamyl-meso-2,6-diaminopimeloyl-D-alanyl-D-alanine + di-trans,octa-cis-undecaprenyl phosphate = di-trans,octa-cis-undecaprenyl diphospho-N-acetyl-alpha-D-muramoyl-L-alanyl-D-glutamyl-meso-2,6-diaminopimeloyl-D-alanyl-D-alanine + UMP. The protein operates within cell wall biogenesis; peptidoglycan biosynthesis. Catalyzes the initial step of the lipid cycle reactions in the biosynthesis of the cell wall peptidoglycan: transfers peptidoglycan precursor phospho-MurNAc-pentapeptide from UDP-MurNAc-pentapeptide onto the lipid carrier undecaprenyl phosphate, yielding undecaprenyl-pyrophosphoryl-MurNAc-pentapeptide, known as lipid I. This Pelobacter propionicus (strain DSM 2379 / NBRC 103807 / OttBd1) protein is Phospho-N-acetylmuramoyl-pentapeptide-transferase.